The primary structure comprises 460 residues: Wadjet protein JetA (460 aa).

In terms of biological role, component of antiplasmid transformation system Wadjet type I, composed of JetA, JetB, JetC and JetD. Expression of Wadjet type I in B.subtilis (strain BEST7003) reduces the transformation efficiency of plasmid pHCMC05. This Bacillus cereus (strain Q1) protein is Wadjet protein JetA.